The chain runs to 370 residues: Aldo-keto reductase dtxS3 (370 aa).

Asp78 lines the NADP(+) pocket. Tyr83 (proton donor) is an active-site residue. His174 contributes to the substrate binding site. Residues 204–205 (SS), Gln230, 259–269 (GPLASGRLARR), and 333–341 (GSVGRIEEA) contribute to the NADP(+) site.

Belongs to the aldo/keto reductase family.

Its pathway is secondary metabolite biosynthesis. Its function is as follows. Aldo-keto reductase; part of the gene cluster that mediates the biosynthesis of destruxins, insecticidal cyclic hexadepsipeptides which induce flaccid paralysis and visceral muscle contraction in insects through targeting the calcium channels and vacuolar-type ATPases. The aldo-keto reductase dtxS3 converts alpha-ketoisocaproic acid from deaminated leucine into alpha-hydroxyisocaproic acid (HIC), which is the first substrate for destruxin assembly by dtxS1. L-aspartate decarboxylase dtxS4 converts aspartic acid into beta-alanine, the last substrate for the destruxin assembly line performed by dtxS1. The nonribosomal peptide synthetase dtxS1 synthesizes destruxins B and B2, whereas the cytochrome P450 monooxygenase dtxS2 is required to convert destruxin B into other destruxin derivatives, including destructins C, D, A and E. Destruxin E-diol (ED) is further produced in a non-enzymatic manner from destruxin E. Destruxins play an important role in virulence and escape from insect host immune defenses. This is Aldo-keto reductase dtxS3 from Metarhizium robertsii (strain ARSEF 23 / ATCC MYA-3075) (Metarhizium anisopliae (strain ARSEF 23)).